Here is a 118-residue protein sequence, read N- to C-terminus: V-type proton ATPase subunit G 3 (118 aa).

The stretch at 3–54 (SQSQGIQQLLQAEKRAKDKLEEAKKRKNKRLRQAKEEATADIDQYRLKREAD) forms a coiled coil. The segment at 19–39 (KDKLEEAKKRKNKRLRQAKEE) is disordered.

It belongs to the V-ATPase G subunit family. In terms of assembly, V-ATPase is a heteromultimeric enzyme made up of two complexes: the ATP-hydrolytic V1 complex and the proton translocation V0 complex. The V1 complex consists of three catalytic AB heterodimers that form a heterohexamer, three peripheral stalks each consisting of EG heterodimers, one central rotor including subunits D and F, and the regulatory subunits C and H. The proton translocation complex V0 consists of the proton transport subunit a, a ring of proteolipid subunits c9c'', rotary subunit d, subunits e and f, and two accessory subunits.

Subunit of the V1 complex of vacuolar(H+)-ATPase (V-ATPase), a multisubunit enzyme composed of a peripheral complex (V1) that hydrolyzes ATP and a membrane integral complex (V0) that translocates protons. V-ATPase is responsible for acidifying and maintaining the pH of intracellular compartments and in some cell types, is targeted to the plasma membrane, where it is responsible for acidifying the extracellular environment. The chain is V-type proton ATPase subunit G 3 (atp6v1g3) from Xenopus laevis (African clawed frog).